Here is a 478-residue protein sequence, read N- to C-terminus: Methionine aminopeptidase 2-1 (478 aa).

Residues 1 to 124 (MGSKSPEGHN…PRVPLSTLFP (124 aa)) form a disordered region. Acidic residues predominate over residues 46 to 56 (NDDDDADDDEK). The segment covering 92–104 (KKKKKRKRSKKKA) has biased composition (basic residues). His-230 is a substrate binding site. Residues Asp-251, Asp-262, and His-331 each contribute to the a divalent metal cation site. His-339 contributes to the substrate binding site. Positions 364 and 459 each coordinate a divalent metal cation.

The protein belongs to the peptidase M24A family. Methionine aminopeptidase eukaryotic type 2 subfamily. The cofactor is Co(2+). Zn(2+) serves as cofactor. Mn(2+) is required as a cofactor. It depends on Fe(2+) as a cofactor.

It localises to the cytoplasm. It carries out the reaction Release of N-terminal amino acids, preferentially methionine, from peptides and arylamides.. Cotranslationally removes the N-terminal methionine from nascent proteins. The N-terminal methionine is often cleaved when the second residue in the primary sequence is small and uncharged (Met-Ala-, Cys, Gly, Pro, Ser, Thr, or Val). This is Methionine aminopeptidase 2-1 from Aspergillus clavatus (strain ATCC 1007 / CBS 513.65 / DSM 816 / NCTC 3887 / NRRL 1 / QM 1276 / 107).